The chain runs to 239 residues: Uridylate kinase (239 aa).

10–13 (KFSG) is a binding site for ATP. The tract at residues 18 to 23 (GENGFG) is involved in allosteric activation by GTP. Gly52 is a binding site for UMP. The ATP site is built by Gly53 and Arg57. UMP contacts are provided by residues Asp73 and 134-141 (TGNPYFTT). ATP is bound by residues Thr161, Tyr167, and Asp170.

The protein belongs to the UMP kinase family. Homohexamer.

Its subcellular location is the cytoplasm. The catalysed reaction is UMP + ATP = UDP + ADP. The protein operates within pyrimidine metabolism; CTP biosynthesis via de novo pathway; UDP from UMP (UMPK route): step 1/1. With respect to regulation, allosterically activated by GTP. Inhibited by UTP. In terms of biological role, catalyzes the reversible phosphorylation of UMP to UDP. This Campylobacter jejuni subsp. jejuni serotype O:2 (strain ATCC 700819 / NCTC 11168) protein is Uridylate kinase.